We begin with the raw amino-acid sequence, 136 residues long: Probable glycine cleavage system H protein 3 (136 aa).

The region spanning 28–109 (MVTVGITSLG…PYDAWIVKIK (82 aa)) is the Lipoyl-binding domain. At Lys69 the chain carries N6-lipoyllysine.

It belongs to the GcvH family. The glycine cleavage system is composed of four proteins: P, T, L and H. (R)-lipoate is required as a cofactor.

Its function is as follows. The glycine cleavage system catalyzes the degradation of glycine. The H protein shuttles the methylamine group of glycine from the P protein to the T protein. This chain is Probable glycine cleavage system H protein 3, found in Sulfurisphaera tokodaii (strain DSM 16993 / JCM 10545 / NBRC 100140 / 7) (Sulfolobus tokodaii).